The chain runs to 586 residues: Aspartate--tRNA(Asp/Asn) ligase (586 aa).

L-aspartate is bound at residue Glu172. Residues 196–199 are aspartate; it reads QLYK. Arg218 is a binding site for L-aspartate. Residues 218 to 220 and Gln227 contribute to the ATP site; that span reads RDE. Position 446 (His446) interacts with L-aspartate. Glu480 is an ATP binding site. Arg487 provides a ligand contact to L-aspartate. ATP is bound at residue 532 to 535; it reads GIDR.

The protein belongs to the class-II aminoacyl-tRNA synthetase family. Type 1 subfamily. As to quaternary structure, homodimer.

Its subcellular location is the cytoplasm. The enzyme catalyses tRNA(Asx) + L-aspartate + ATP = L-aspartyl-tRNA(Asx) + AMP + diphosphate. Its function is as follows. Aspartyl-tRNA synthetase with relaxed tRNA specificity since it is able to aspartylate not only its cognate tRNA(Asp) but also tRNA(Asn). Reaction proceeds in two steps: L-aspartate is first activated by ATP to form Asp-AMP and then transferred to the acceptor end of tRNA(Asp/Asn). In Borreliella afzelii (strain PKo) (Borrelia afzelii), this protein is Aspartate--tRNA(Asp/Asn) ligase.